Here is a 902-residue protein sequence, read N- to C-terminus: HTH-type transcriptional regulator MalT (902 aa).

An ATP-binding site is contributed by Ser-39 to Thr-46. Residues Glu-832–Leu-897 form the HTH luxR-type domain. A DNA-binding region (H-T-H motif) is located at residues Asn-856–Arg-875.

The protein belongs to the MalT family. In terms of assembly, monomer in solution. Oligomerizes to an active state in the presence of the positive effectors ATP and maltotriose.

Its activity is regulated as follows. Activated by ATP and maltotriose, which are both required for DNA binding. Functionally, positively regulates the transcription of the maltose regulon whose gene products are responsible for uptake and catabolism of malto-oligosaccharides. Specifically binds to the promoter region of its target genes, recognizing a short DNA motif called the MalT box. The protein is HTH-type transcriptional regulator MalT of Vibrio cholerae serotype O1 (strain ATCC 39315 / El Tor Inaba N16961).